A 164-amino-acid chain; its full sequence is Transcription elongation factor GreA (164 aa).

This sequence belongs to the GreA/GreB family.

In terms of biological role, necessary for efficient RNA polymerase transcription elongation past template-encoded arresting sites. The arresting sites in DNA have the property of trapping a certain fraction of elongating RNA polymerases that pass through, resulting in locked ternary complexes. Cleavage of the nascent transcript by cleavage factors such as GreA or GreB allows the resumption of elongation from the new 3'terminus. GreA releases sequences of 2 to 3 nucleotides. This Helicobacter pylori (strain P12) protein is Transcription elongation factor GreA.